Here is a 200-residue protein sequence, read N- to C-terminus: Probable UbiX-like flavin prenyltransferase (200 aa).

FMN-binding positions include 9–11 (GAT), serine 36, 87–90 (SMKT), and arginine 122.

Belongs to the UbiX/PAD1 family. YclB subfamily. In terms of assembly, homododecamer.

It carries out the reaction dimethylallyl phosphate + FMNH2 = prenylated FMNH2 + phosphate. Functionally, involved in the non-oxidative decarboxylation and detoxification of phenolic derivatives under both aerobic and anaerobic conditions. Flavin prenyltransferase that catalyzes the synthesis of the prenylated FMN cofactor (prenyl-FMN) for phenolic acid decarboxylase. This is Probable UbiX-like flavin prenyltransferase from Streptomyces sp. (strain D7).